The sequence spans 106 residues: MTDEPNQDDPQGPEVEAAKPSLKQPPMYKVVLLNDDYTPMDFVVEVLQRFFNKDRSQATQIMLHVHTRGKGVCGVYSRDVAETKVSQVNDYAREHEHPLLCTMEEA.

Residues Met-1 to Leu-22 are disordered.

It belongs to the ClpS family. In terms of assembly, binds to the N-terminal domain of the chaperone ClpA.

Involved in the modulation of the specificity of the ClpAP-mediated ATP-dependent protein degradation. In Halorhodospira halophila (strain DSM 244 / SL1) (Ectothiorhodospira halophila (strain DSM 244 / SL1)), this protein is ATP-dependent Clp protease adapter protein ClpS.